Consider the following 258-residue polypeptide: Acyl-[acyl-carrier-protein]--UDP-N-acetylglucosamine O-acyltransferase (258 aa).

This sequence belongs to the transferase hexapeptide repeat family. LpxA subfamily. As to quaternary structure, homotrimer.

It localises to the cytoplasm. The catalysed reaction is a (3R)-hydroxyacyl-[ACP] + UDP-N-acetyl-alpha-D-glucosamine = a UDP-3-O-[(3R)-3-hydroxyacyl]-N-acetyl-alpha-D-glucosamine + holo-[ACP]. It participates in glycolipid biosynthesis; lipid IV(A) biosynthesis; lipid IV(A) from (3R)-3-hydroxytetradecanoyl-[acyl-carrier-protein] and UDP-N-acetyl-alpha-D-glucosamine: step 1/6. In terms of biological role, involved in the biosynthesis of lipid A, a phosphorylated glycolipid that anchors the lipopolysaccharide to the outer membrane of the cell. The chain is Acyl-[acyl-carrier-protein]--UDP-N-acetylglucosamine O-acyltransferase from Ectopseudomonas mendocina (strain ymp) (Pseudomonas mendocina).